The sequence spans 360 residues: D-alanine--D-alanine ligase (360 aa).

One can recognise an ATP-grasp domain in the interval 149–353 (KKLMAAEGLP…YEELLDVLVQ (205 aa)). 176–231 (KNLLGLPVFVKPARGGSSIGISRVTAWEDFNKAVGLARAHDEKVIVESEIVGSEVE) contacts ATP. Mg(2+) contacts are provided by aspartate 308, glutamate 320, and asparagine 322.

This sequence belongs to the D-alanine--D-alanine ligase family. Mg(2+) serves as cofactor. Requires Mn(2+) as cofactor.

It localises to the cytoplasm. It carries out the reaction 2 D-alanine + ATP = D-alanyl-D-alanine + ADP + phosphate + H(+). Its pathway is cell wall biogenesis; peptidoglycan biosynthesis. Its function is as follows. Cell wall formation. The polypeptide is D-alanine--D-alanine ligase (Corynebacterium glutamicum (strain ATCC 13032 / DSM 20300 / JCM 1318 / BCRC 11384 / CCUG 27702 / LMG 3730 / NBRC 12168 / NCIMB 10025 / NRRL B-2784 / 534)).